Here is a 350-residue protein sequence, read N- to C-terminus: Holliday junction branch migration complex subunit RuvB (350 aa).

The tract at residues 4–184 is large ATPase domain (RuvB-L); that stretch reads ADRIVTASSR…FGIVQRLEFY (181 aa). ATP-binding positions include I23, R24, G65, K68, T69, T70, 131–133, R174, Y184, and R221; that span reads EDF. Position 69 (T69) interacts with Mg(2+). A small ATPAse domain (RuvB-S) region spans residues 185–255; it reads STEDLATIVR…IADLALNMLD (71 aa). The tract at residues 258 to 350 is head domain (RuvB-H); that stretch reads ERGFDHQDRR…TPDLFEGDIV (93 aa). R294, R313, and R318 together coordinate DNA.

This sequence belongs to the RuvB family. Homohexamer. Forms an RuvA(8)-RuvB(12)-Holliday junction (HJ) complex. HJ DNA is sandwiched between 2 RuvA tetramers; dsDNA enters through RuvA and exits via RuvB. An RuvB hexamer assembles on each DNA strand where it exits the tetramer. Each RuvB hexamer is contacted by two RuvA subunits (via domain III) on 2 adjacent RuvB subunits; this complex drives branch migration. In the full resolvosome a probable DNA-RuvA(4)-RuvB(12)-RuvC(2) complex forms which resolves the HJ.

The protein localises to the cytoplasm. The enzyme catalyses ATP + H2O = ADP + phosphate + H(+). In terms of biological role, the RuvA-RuvB-RuvC complex processes Holliday junction (HJ) DNA during genetic recombination and DNA repair, while the RuvA-RuvB complex plays an important role in the rescue of blocked DNA replication forks via replication fork reversal (RFR). RuvA specifically binds to HJ cruciform DNA, conferring on it an open structure. The RuvB hexamer acts as an ATP-dependent pump, pulling dsDNA into and through the RuvAB complex. RuvB forms 2 homohexamers on either side of HJ DNA bound by 1 or 2 RuvA tetramers; 4 subunits per hexamer contact DNA at a time. Coordinated motions by a converter formed by DNA-disengaged RuvB subunits stimulates ATP hydrolysis and nucleotide exchange. Immobilization of the converter enables RuvB to convert the ATP-contained energy into a lever motion, pulling 2 nucleotides of DNA out of the RuvA tetramer per ATP hydrolyzed, thus driving DNA branch migration. The RuvB motors rotate together with the DNA substrate, which together with the progressing nucleotide cycle form the mechanistic basis for DNA recombination by continuous HJ branch migration. Branch migration allows RuvC to scan DNA until it finds its consensus sequence, where it cleaves and resolves cruciform DNA. This Stutzerimonas stutzeri (strain A1501) (Pseudomonas stutzeri) protein is Holliday junction branch migration complex subunit RuvB.